The chain runs to 383 residues: MVRQLILISSLLAAVAVRAPADPAHPMVTEAPDVNLVEKRATTCTFSGSEGASKASKSKTSCSTIYLSDVAVPSGTTLDLSDLNDGTHVIFQGETTFGYEEWEGPLVRVSGTDITVEGESDAVLNGDGSRWWDGEGGNGGKTKPKFFYAHDLTSSTIKSIYIENSPVQVFSIDGSTDLTMTDITVDNTDGDTDDLAANTDGFDIGESTYITITGAEIYNQDDCVAINSGENIYFSASVCSGGHGLSIGSVGGRDDNTVKNVTFYDVNVLKSQQAIRIKTIYGDTGSVSEVTYHEIAFSDATDYGIVIEQNYDDTSKTPTTGVPITDFVLENIVGTCEDDDCTEVYIACGDGSCSDWTWTGVSVTGGSVSDDCLNVPSGISCDL.

Positions 1–16 (MVRQLILISSLLAAVA) are cleaved as a signal peptide. Positions 17-40 (VRAPADPAHPMVTEAPDVNLVEKR) are excised as a propeptide. The cysteines at positions 44 and 62 are disulfide-linked. PbH1 repeat units follow at residues 175–206 (STDL…DIGE) and 207–228 (STYI…AINS). The active-site Proton donor is the aspartate 221. A disulfide bridge links cysteine 223 with cysteine 239. Histidine 243 is a catalytic residue. 2 PbH1 repeats span residues 253 to 279 (RDDN…RIKT) and 287 to 309 (VSEV…VIEQ). Residue asparagine 260 is glycosylated (N-linked (GlcNAc...) asparagine). 2 cysteine pairs are disulfide-bonded: cysteine 348–cysteine 353 and cysteine 372–cysteine 381.

Belongs to the glycosyl hydrolase 28 family.

Its subcellular location is the secreted. It catalyses the reaction (1,4-alpha-D-galacturonosyl)n+m + H2O = (1,4-alpha-D-galacturonosyl)n + (1,4-alpha-D-galacturonosyl)m.. Its function is as follows. Involved in maceration and soft-rotting of plant tissue. Hydrolyzes the 1,4-alpha glycosidic bonds of de-esterified pectate in the smooth region of the plant cell wall. This Aspergillus niger protein is Probable endopolygalacturonase C (pgaC).